We begin with the raw amino-acid sequence, 145 residues long: uncharacterized protein (145 aa).

One can recognise a CBM3 domain in the interval 1–145 (LQYRAADTNA…NGQIVWGTAP (145 aa)).

This is an uncharacterized protein from Paenibacillus lautus (Bacillus lautus).